A 224-amino-acid polypeptide reads, in one-letter code: Probable Brix domain-containing ribosomal biogenesis protein (224 aa).

Positions 1-196 constitute a Brix domain; it reads MMLITTSHRP…IWIMEDGRRW (196 aa).

Its function is as follows. Probably involved in the biogenesis of the ribosome. This Pyrococcus horikoshii (strain ATCC 700860 / DSM 12428 / JCM 9974 / NBRC 100139 / OT-3) protein is Probable Brix domain-containing ribosomal biogenesis protein.